Reading from the N-terminus, the 285-residue chain is SLAM family member 8 (285 aa).

An N-terminal signal peptide occupies residues 1 to 22 (MVMRPLWSLLLWEALLPITVTG). Residues 23-233 (AQVLSKVGGS…AAPGKASYKD (211 aa)) lie on the Extracellular side of the membrane. Residue N85 is glycosylated (N-linked (GlcNAc...) asparagine). The region spanning 128-215 (PVVQVFIAVE…PVSWDLATVT (88 aa)) is the Ig-like C2-type domain. Residues C152 and C201 are joined by a disulfide bond. The chain crosses the membrane as a helical span at residues 234–254 (VLLVVVPVSLLLMLVTLFSAW). Topologically, residues 255 to 285 (HWCPCSGKKKKDVHADRVGPETENPLVQDLP) are cytoplasmic. The interval 262–285 (KKKKDVHADRVGPETENPLVQDLP) is disordered.

As to expression, expressed in lymph node, spleen, thymus and bone marrow.

Its subcellular location is the membrane. In terms of biological role, may play a role in B-lineage commitment and/or modulation of signaling through the B-cell receptor. This Homo sapiens (Human) protein is SLAM family member 8 (SLAMF8).